We begin with the raw amino-acid sequence, 23 residues long: Basic phospholipase A2 homolog (23 aa).

Post-translationally, contains 7 disulfide bonds. In terms of tissue distribution, expressed by the venom gland.

It is found in the secreted. This is Basic phospholipase A2 homolog from Trimeresurus stejnegeri (Chinese green tree viper).